The primary structure comprises 472 residues: Divalent metal cation transporter MntH (472 aa).

A run of 11 helical transmembrane segments spans residues 59–79 (LLAFLGPGYMVSVGYMDPGNW), 92–112 (MLLSVILLSNVMAIVLQALAA), 136–156 (LALWVVCELAIIACDLAEVIG), 167–187 (VPIIWGVVITAVDVVLVLLLM), 196–216 (AFVIALLLVIFGCFVVQIVLA), 233–253 (VVADPQALYLAIGIVGATVMP), 288–308 (LALMLALFINASILILAAAVF), 325–345 (LLAPVLGVGVAATLFATALLA), 377–397 (VLTRGLAIVPVIVVVALYGEQ), 402–422 (LLLLSQVILSMQLPFAVIPLL), and 439–459 (WLMVVAWLIAGVIVVLNVKLL).

This sequence belongs to the NRAMP family.

Its subcellular location is the cell inner membrane. In terms of biological role, h(+)-stimulated, divalent metal cation uptake system. This is Divalent metal cation transporter MntH from Xylella fastidiosa (strain 9a5c).